The primary structure comprises 31 residues: Cycloviolacin-O19 (31 aa).

The segment at residues 1-31 (GTLPCGESCVWIPCISSVVGCSCKSKVCYKD) is a cross-link (cyclopeptide (Gly-Asp)). Intrachain disulfides connect Cys5/Cys21, Cys9/Cys23, and Cys14/Cys28.

In terms of processing, this is a cyclic peptide. In terms of tissue distribution, expressed in petioles and runners but not in leaves, petals and roots (at protein level).

In terms of biological role, probably participates in a plant defense mechanism. The chain is Cycloviolacin-O19 from Viola odorata (Sweet violet).